Reading from the N-terminus, the 866-residue chain is MNLPPNPVIARGRGRGRKPNNVEANRGFAPSLGQKSDPSHSEGNQASGGNGGGGDAQVGPSIEKSSLSAVQMHKSEGDPRGSVRGRRLITDLVYSRPPGMTSKKGVVGTHITVQANYFKVLKRPNWTIYQYRVDFTPDVEATRLRRSFLYEHKGILGGYIFDGTNMFCINQFKAVQDSPYVLELVTKSRAGENIEIKIKAVGSVQSTDAEQFQVLNLILRRAMEGLDLKLVSRYYYDPQAKINLENFRMQLWPGYQTSIRQHENDILLCSEICHKVMRTETLYNILSDAIRDSDDYQSTFKRAVMGMVILTDYNNKTYRIDDVDFQSTPLCKFKTNDGEISYVDYYKKRYNIIIRDLKQPLVMSRPTDKNIRGGNDQAIMIIPELARATGMTDAMRADFRTLRAMSEHTRLNPDRRIERLRMFNKRLKSCKQSVETLKSWNIELDSALVEIPARVLPPEKILFGNQKIFVCDARADWTNEFRTCSMFKNVHINRWYVITPSRNLRETQEFVQMCIRTASSMKMNICNPIYEEIPDDRNGTYSQAIDNAAANDPQIVMVVMRSPNEEKYSCIKKRTCVDRPVPSQVVTLKVIAPRQQKPTGLMSIATKVVIQMNAKLMGAPWQVVIPLHGLMTVGFDVCHSPKNKNKSYGAFVATMDQKESFRYFSTVNEHIKGQELSEQMSVNMACALRSYQEQHRSLPERILFFRDGVGDGQLYQVVNSEVNTLKDRLDEIYKSAGKQEGCRMTFIIVSKRINSRYFTGHRNPVPGTVVDDVITLPERYDFFLVSQAVRIGTVSPTSYNVISDNMGLNADKLQMLSYKMTHMYYNYSGTIRVPAVCHYAHKLAFLVAESINRAPSAGLQNQLYFL.

At Met-1 the chain carries N-acetylmethionine. The disordered stretch occupies residues 1–61 (MNLPPNPVIA…GGGDAQVGPS (61 aa)). A symmetric dimethylarginine mark is found at Arg-11, Arg-13, Arg-15, and Arg-17. A compositionally biased stretch (gly residues) spans 46 to 56 (ASGGNGGGGDA). The region spanning 281 to 390 (TLYNILSDAI…IIPELARATG (110 aa)) is the PAZ domain. Positions 555-852 (IVMVVMRSPN…LAFLVAESIN (298 aa)) constitute a Piwi domain.

This sequence belongs to the argonaute family. Piwi subfamily. As to quaternary structure, component of the ping-pong piRNA processing (4P) complex consisting of krimp, aub and AGO3. Interacts (via N-terminus when symmetrically dimethylated on arginine residues) with krimp (via tudor domain); this interaction requires methylation of at least one N-terminal arginie residue. Interacts with vas and AGO3. May form part of a piRNA processing complex consisting of tud, aub and AGO3. Interacts (when symmetrically dimethylated on arginine residues) with tud; methylation and/or interaction requires association with piRNA. Interacts (via N-terminus and when associated with piRNA) with csul/PRMT5; the interaction recruits the PRMT5 methylosome complex to modify N-terminal arginines by symmetrical dimethylation but involves residues other than the arginines to be modified. Forms a complex with smg, twin, AGO3, nanos mRNA and piRNAs that targets the nanos 3'-untranslated region, in early embryos. Interacts with nanos mRNA and rump (in an RNA-dependent manner). Interacts with papi and vret. Interacts with me31B. In terms of processing, symmetrical dimethylation of arginines (sDMA) on Arg-11, Arg-13 and/or Arg-15 by csul/PRMT5/DART5, is required for binding to tud, localization to the pole plasm and association with the correct piRNAs. SDMA on Arg-11, Arg-13, Arg-15 and/or Arg-17 is required for binding to krimp and stable recruitment to subregions of the nuage. Methylation state does not affect protein stability. SDMA plays an important role in ping-pong amplification of piRNAs and is essential for function in vivo. Methylation state functions as an indicator of its piRNA binding state. PiRNA binding promotes sDMA modification; piRNA binding induces a conformational change that exposes the N-terminal arginines, making them available to the methylosome complex. Expressed in ovary. In the germarium, found in germline stem and cyst cells. In egg chambers from stage 6, expressed both in nurse cells and oocytes. In embryos, accumulates in the pole cells, although low expression is detected throughout the entire embryo. In testis, expressed in germline stem cells, gonialblast and spermatogonia cells (at protein level). In the adult brain, expressed in the ellipsoid body, the mushroom body subdivision in the peduncle and the cell body layer. Expressed specifically in alpha'/beta' and gamma neurons.

It is found in the cytoplasm. The protein resides in the cytosol. It localises to the perinuclear region. The protein localises to the cytoplasmic ribonucleoprotein granule. In terms of biological role, component of the perinuclear meiotic nuage, a germline-specific subcellular membraneless ribonucleoprotein compartment involved in production of transposable element-repressing Piwi-interacting RNA (piRNA)-induced silencing complexes (piRISCs), which are essential for maintaining germline integrity during oogenesis; essential for the formation and/or structural integrity of nuage particles. Acts via the Piwi-interacting RNA (piRNA) metabolic process, which mediates the repression of transposable elements during meiosis by forming complexes composed of piRNAs and Piwi proteins and governs the methylation and subsequent repression of transposons. Directly binds piRNAs, a class of 24 to 30 nucleotide RNAs that are generated by a Dicer-independent mechanism and are primarily derived from transposons and other repeated sequence elements. Shows RNA cleavage or slicer activity; including aub-piRNA complexes from ovary and testis. When loaded with guide piRNAs recognizes and cleaves complementary RNAs to repress their expression and produce complementary piRNAs. Together with Piwi protein AGO3 recruited to subregions of the perinuclear nuage by krimp, which coordinates their activity in the ping-pong amplification step of secondary piRNA biogenesis. Krimp recruits piRNA bound aub and unbound AGO3, bringing them into close proximity to facilitate the loading onto AGO3 of freshly cut piRNAs generated by aub cleavage of target sequences; krimp recognizes the piRNA loading state of the Piwi proteins via symmetrically dimethylated arginine modification in their N-terminus. Important for asymmetric ping-pong amplification to bias production towards antisense piRNAs capable of silencing transposable elements. Required for the localization of mael and krimp to the meiotic nuage. In ovary, associates predominantly with antisense piRNAs that contain uridine at their 5' end. In testis, associates with Su(Ste) antisense piRNAs (most abundant class of piRNAs found in complex with aub in testes) and negatively regulates Ste expression, most likely by cleaving its transcripts. Also in testis, may repress translation of vas when associated with a piRNA derived from chromosome X, termed AT-chX-1, whose sequence shows strong complementarity to vas mRNA. Involved in repression of long interspersed nuclear elements (LINEs) including HeT-A, I-element and TART LINEs. Repression of specialized telomeric retroelements HeT-A and TART is involved in telomere regulation; Drosophila telomeres being maintained by transposition of specialized telomeric retroelements. Also involved in telomeric trans-silencing, a repression mechanism by which a transposon or a transgene inserted in subtelomeric heterochromatin has the capacity to repress in trans, in the female germline, a homologous transposon, or transgene located in euchromatin. Involved in the suppression of meiotic drive of sex chromosomes and autosomes. Involved in transposon silencing in the adult brain. Required for dorsal-ventral as well as anterior-posterior patterning of the egg. Required during oogenesis for primordial germ cell formation and activation of RNA interference. During early oogenesis, required for osk mRNA silencing and polarization of the microtubule cytoskeleton. During mid-oogenesis, required for osk mRNA localization to the posterior pole and efficient translation of osk and grk. During embryogenesis, required for posterior localization of nanos (nos) mRNA, independently of osk, and pole cell formation. Forms a complex with smg, twin, AGO3 and specific piRNAs that targets nanos mRNA (and probably other maternal mRNAS) for deadenylation promoting its decay during early embryogenesis. The chain is Protein aubergine from Drosophila melanogaster (Fruit fly).